We begin with the raw amino-acid sequence, 311 residues long: Aurora kinase (311 aa).

One can recognise a Protein kinase domain in the interval 20–300 (FEIGRFLGRG…IEDILRHPFL (281 aa)). Lys49 lines the ATP pocket. The Proton acceptor role is filled by Asp143. The tract at residues 189–216 (DFGWSVHHPTHGGRRRTQCGTLDYLPPE) is activation loop. Residue Thr205 is modified to Phosphothreonine; by autocatalysis. The Destruction (D)-box motif lies at 280–299 (MLIRSPEARISIEDILRHPF).

The protein belongs to the protein kinase superfamily. Ser/Thr protein kinase family. Aurora subfamily. In terms of assembly, interacts with EB1 (via C-terminal residues 101-238). Phosphorylated in mitosis and cytokinesis. Activated by autophosphorylation at Thr-205.

Its subcellular location is the nucleus. The protein resides in the cytoplasm. It localises to the cytoskeleton. The protein localises to the microtubule organizing center. It is found in the centrosome. Its subcellular location is the spindle. The protein resides in the spindle pole. It localises to the nucleus membrane. It catalyses the reaction L-seryl-[protein] + ATP = O-phospho-L-seryl-[protein] + ADP + H(+). The enzyme catalyses L-threonyl-[protein] + ATP = O-phospho-L-threonyl-[protein] + ADP + H(+). Activated by cell-cycle phase specific phosphorylation. Inhibited by ATP-competitive inhibitors N-[4-[[6-Methoxy-7-[3-(4-morpholinyl)propoxy]-4-quinazolinyl]amino]phenyl]benzamide (ZM447439) and cyclopropanecarboxylic acid-(3-(4-(3-trifluoromethylphenylamino)-pyrimidin-2-ylamino)-phenyl)-amide (CFPPA). Inhibition leads to reduced growth, increased cytokinesis, microtubular defects, and increased ploidy of the cells. In terms of biological role, involved in regulation of the cell cycle. Required for mitotic cell division and cytokinesis. Based on its localization to centrosomes and spindle microtubules, as well as to various cytoskeletal components such as the median body, parental attachment disk, and anterior and posterior-lateral paraflagellar dense rods, may coordinate reorganization and segregation of tubulin-containing structures during mitosis and cytokinesis. May regulate microtubule disassembly by phosphorylating cytoskeletal proteins leading to their destabilization. Phosphorylates EB1 at 'Ser-148' in vitro. Phosphorylates histone H3 in vitro. The polypeptide is Aurora kinase (Giardia intestinalis (strain ATCC 50803 / WB clone C6) (Giardia lamblia)).